Reading from the N-terminus, the 477-residue chain is tRNA-2-methylthio-N(6)-dimethylallyladenosine synthase (477 aa).

The 118-residue stretch at 3 to 120 (KKLHIKTWGC…LPAMIKQVQE (118 aa)) folds into the MTTase N-terminal domain. Residues Cys-12, Cys-49, Cys-83, Cys-157, Cys-161, and Cys-164 each coordinate [4Fe-4S] cluster. A Radical SAM core domain is found at 143–375 (RAEGATAFVS…QHVINNQSMQ (233 aa)). The TRAM domain occupies 378-441 (RAMLGSTQRI…PNSLRGRFIR (64 aa)).

It belongs to the methylthiotransferase family. MiaB subfamily. Monomer. [4Fe-4S] cluster is required as a cofactor.

The protein resides in the cytoplasm. The enzyme catalyses N(6)-dimethylallyladenosine(37) in tRNA + (sulfur carrier)-SH + AH2 + 2 S-adenosyl-L-methionine = 2-methylsulfanyl-N(6)-dimethylallyladenosine(37) in tRNA + (sulfur carrier)-H + 5'-deoxyadenosine + L-methionine + A + S-adenosyl-L-homocysteine + 2 H(+). Catalyzes the methylthiolation of N6-(dimethylallyl)adenosine (i(6)A), leading to the formation of 2-methylthio-N6-(dimethylallyl)adenosine (ms(2)i(6)A) at position 37 in tRNAs that read codons beginning with uridine. This is tRNA-2-methylthio-N(6)-dimethylallyladenosine synthase from Aeromonas salmonicida (strain A449).